Consider the following 448-residue polypeptide: C4-dicarboxylate transport protein (448 aa).

The next 9 membrane-spanning stretches (helical) occupy residues 13-33 (SLYA…HFYP), 49-69 (LIKM…IAGM), 81-101 (LALL…LLVV), 149-169 (AFAK…GFAL), 193-213 (IVGI…AFTI), 227-247 (LMGA…GIVS), 294-314 (VVGL…SIYL), 336-356 (TLLA…GSGF), and 357-377 (IVLA…LALI).

This sequence belongs to the dicarboxylate/amino acid:cation symporter (DAACS) (TC 2.A.23) family.

The protein localises to the cell inner membrane. Responsible for the transport of dicarboxylates such as succinate, fumarate, and malate from the periplasm across the membrane. In Albidiferax ferrireducens (strain ATCC BAA-621 / DSM 15236 / T118) (Rhodoferax ferrireducens), this protein is C4-dicarboxylate transport protein.